Reading from the N-terminus, the 268-residue chain is Hydroxyethylthiazole kinase (268 aa).

Residue Met45 coordinates substrate. 2 residues coordinate ATP: Arg121 and Thr167. Gly194 contributes to the substrate binding site.

This sequence belongs to the Thz kinase family. Mg(2+) serves as cofactor.

The catalysed reaction is 5-(2-hydroxyethyl)-4-methylthiazole + ATP = 4-methyl-5-(2-phosphooxyethyl)-thiazole + ADP + H(+). It participates in cofactor biosynthesis; thiamine diphosphate biosynthesis; 4-methyl-5-(2-phosphoethyl)-thiazole from 5-(2-hydroxyethyl)-4-methylthiazole: step 1/1. Its function is as follows. Catalyzes the phosphorylation of the hydroxyl group of 4-methyl-5-beta-hydroxyethylthiazole (THZ). The polypeptide is Hydroxyethylthiazole kinase (Bacillus thuringiensis subsp. konkukian (strain 97-27)).